We begin with the raw amino-acid sequence, 133 residues long: Large ribosomal subunit protein uL14m (133 aa).

It belongs to the universal ribosomal protein uL14 family. In terms of assembly, probably part of the large ribosomal subunit.

Its subcellular location is the hydrogenosome. In Nyctotherus ovalis, this protein is Large ribosomal subunit protein uL14m (rpl14).